The chain runs to 284 residues: Bifunctional protein FolD (284 aa).

NADP(+)-binding positions include 166–168 (GSS) and Ile-232.

The protein belongs to the tetrahydrofolate dehydrogenase/cyclohydrolase family. As to quaternary structure, homodimer.

It carries out the reaction (6R)-5,10-methylene-5,6,7,8-tetrahydrofolate + NADP(+) = (6R)-5,10-methenyltetrahydrofolate + NADPH. The enzyme catalyses (6R)-5,10-methenyltetrahydrofolate + H2O = (6R)-10-formyltetrahydrofolate + H(+). The protein operates within one-carbon metabolism; tetrahydrofolate interconversion. Its function is as follows. Catalyzes the oxidation of 5,10-methylenetetrahydrofolate to 5,10-methenyltetrahydrofolate and then the hydrolysis of 5,10-methenyltetrahydrofolate to 10-formyltetrahydrofolate. The sequence is that of Bifunctional protein FolD from Buchnera aphidicola subsp. Cinara cedri (strain Cc).